Here is a 456-residue protein sequence, read N- to C-terminus: Methionine aminopeptidase 2 (456 aa).

Residues Met1–Pro11 show a composition bias toward pro residues. Residues Met1–Arg127 form a disordered region. Residues Glu31–Glu45 are compositionally biased toward acidic residues. Basic residues predominate over residues Lys66 to Lys79. His209 serves as a coordination point for substrate. A divalent metal cation-binding residues include Asp229, Asp240, and His309. His317 contacts substrate. A divalent metal cation-binding residues include Glu343 and Glu437.

The protein belongs to the peptidase M24A family. Methionine aminopeptidase eukaryotic type 2 subfamily. Co(2+) is required as a cofactor. Requires Zn(2+) as cofactor. It depends on Mn(2+) as a cofactor. Fe(2+) serves as cofactor.

It is found in the cytoplasm. The catalysed reaction is Release of N-terminal amino acids, preferentially methionine, from peptides and arylamides.. Cotranslationally removes the N-terminal methionine from nascent proteins. The N-terminal methionine is often cleaved when the second residue in the primary sequence is small and uncharged (Met-Ala-, Cys, Gly, Pro, Ser, Thr, or Val). The chain is Methionine aminopeptidase 2 from Puccinia graminis f. sp. tritici (strain CRL 75-36-700-3 / race SCCL) (Black stem rust fungus).